Consider the following 152-residue polypeptide: Transcriptional repressor NrdR (152 aa).

A zinc finger spans residues cysteine 3 to cysteine 34. Positions proline 49–alanine 139 constitute an ATP-cone domain.

It belongs to the NrdR family. It depends on Zn(2+) as a cofactor.

In terms of biological role, negatively regulates transcription of bacterial ribonucleotide reductase nrd genes and operons by binding to NrdR-boxes. This Psychrobacter arcticus (strain DSM 17307 / VKM B-2377 / 273-4) protein is Transcriptional repressor NrdR.